Here is a 137-residue protein sequence, read N- to C-terminus: MHFRMKVLENSSKHNTPKKQKTFQHYLPAGDRCYSCIHCRANLAAHAELISKSFQGSQGKAYLFNAVVNVGCGPAEERVLLTGLHAVADIYCEICKTTLGWKYEHAFESSQKYKEGKFIIELAHMVKDNGWDEQNDS.

Positions 1-20 (MHFRMKVLENSSKHNTPKKQ) are disordered. A Yippee domain is found at 32 to 129 (RCYSCIHCRA…IELAHMVKDN (98 aa)). Zn(2+)-binding residues include Cys-36, Cys-39, Cys-92, and Cys-95.

Belongs to the yippee family.

This chain is Protein yippee-like F37A8.5, found in Caenorhabditis elegans.